The sequence spans 312 residues: Borealin-2 (312 aa).

Basic residues predominate over residues 1-10 (MPPRKAPAKR). Residues 1–26 (MPPRKAPAKRRSTDSGVERDRGALSQ) form a disordered region. The segment covering 11–26 (RSTDSGVERDRGALSQ) has biased composition (basic and acidic residues).

Belongs to the borealin family. Component of the CPC complex.

It is found in the nucleus. Its subcellular location is the chromosome. It localises to the centromere. Its function is as follows. Component of the chromosomal passenger complex (CPC), a complex that acts as a key regulator of mitosis. The CPC complex has essential functions at the centromere in ensuring correct chromosome alignment and segregation and is required for chromatin-induced microtubule stabilization and spindle assembly. The protein is Borealin-2 of Gallus gallus (Chicken).